The chain runs to 66 residues: Beta-defensin 107A (66 aa).

An N-terminal signal peptide occupies residues 1 to 22; that stretch reads MKIFFFIFAALFLLAQIFQART. 2 cysteine pairs are disulfide-bonded: cysteine 37-cysteine 51 and cysteine 41-cysteine 60.

The protein belongs to the beta-defensin family.

The protein resides in the secreted. In terms of biological role, has antibacterial activity. The protein is Beta-defensin 107A (DEFB107A) of Gorilla gorilla gorilla (Western lowland gorilla).